The primary structure comprises 201 residues: Small ribosomal subunit protein uS4 (201 aa).

The interval 27–47 is disordered; the sequence is SKKNYPPGQHGNSRKRKTSEY. One can recognise an S4 RNA-binding domain in the interval 92-152; sequence GRLDNVVYRL…EKSKSMEVIA (61 aa).

It belongs to the universal ribosomal protein uS4 family. Part of the 30S ribosomal subunit. Contacts protein S5. The interaction surface between S4 and S5 is involved in control of translational fidelity.

In terms of biological role, one of the primary rRNA binding proteins, it binds directly to 16S rRNA where it nucleates assembly of the body of the 30S subunit. With S5 and S12 plays an important role in translational accuracy. The chain is Small ribosomal subunit protein uS4 from Parabacteroides distasonis (strain ATCC 8503 / DSM 20701 / CIP 104284 / JCM 5825 / NCTC 11152).